Consider the following 375-residue polypeptide: Protein arginine N-methyltransferase 6 (375 aa).

Positions 1–36 (MSQPKRRKLESGGGGEGGEGTEEEDGGELEVAVPRP) are disordered. Acidic residues predominate over residues 19–28 (EGTEEEDGGE). Phosphothreonine is present on Thr-21. Position 38 is an asymmetric dimethylarginine; by autocatalysis (Arg-38). An SAM-dependent MTase PRMT-type domain is found at 44 to 374 (DQLYYQCYSD…EEKTKDFAME (331 aa)). The S-adenosyl-L-methionine site is built by His-57, Arg-66, Gly-90, Glu-112, and Glu-141. Active-site residues include Glu-155 and Glu-164.

The protein belongs to the class I-like SAM-binding methyltransferase superfamily. Protein arginine N-methyltransferase family. PRMT6 subfamily. In terms of assembly, interacts with (and methylates) HIV-1 Tat, Rev and Nucleocapsid protein p7 (NC). Interacts with EPB41L3 and NCOA1. In terms of processing, automethylation enhances its stability.

It localises to the nucleus. It catalyses the reaction L-arginyl-[protein] + 2 S-adenosyl-L-methionine = N(omega),N(omega)-dimethyl-L-arginyl-[protein] + 2 S-adenosyl-L-homocysteine + 2 H(+). Functionally, arginine methyltransferase that can catalyze the formation of both omega-N monomethylarginine (MMA) and asymmetrical dimethylarginine (aDMA), with a strong preference for the formation of aDMA. Preferentially methylates arginyl residues present in a glycine and arginine-rich domain and displays preference for monomethylated substrates. Specifically mediates the asymmetric dimethylation of histone H3 'Arg-2' to form H3R2me2a. H3R2me2a represents a specific tag for epigenetic transcriptional repression and is mutually exclusive with methylation on histone H3 'Lys-4' (H3K4me2 and H3K4me3). Acts as a transcriptional repressor of various genes such as HOXA2, THBS1 and TP53. Repression of TP53 blocks cellular senescence. Also methylates histone H2A and H4 'Arg-3' (H2AR3me and H4R3me, respectively). Acts as a regulator of DNA base excision during DNA repair by mediating the methylation of DNA polymerase beta (POLB), leading to the stimulation of its polymerase activity by enhancing DNA binding and processivity. Methylates HMGA1. Regulates alternative splicing events. Acts as a transcriptional coactivator of a number of steroid hormone receptors including ESR1, ESR2, PGR and NR3C1. Promotes fasting-induced transcriptional activation of the gluconeogenic program through methylation of the CRTC2 transcription coactivator. Methylates GPS2, protecting GPS2 from ubiquitination and degradation. Methylates SIRT7, inhibiting SIRT7 histone deacetylase activity and promoting mitochondria biogenesis. This chain is Protein arginine N-methyltransferase 6 (PRMT6), found in Bos taurus (Bovine).